A 122-amino-acid polypeptide reads, in one-letter code: MKIEASALRQLGIKQIEERAAEIKAELAALRQKKNSGDVGANDIKTAKKNLARALTVRREKILEELVEAYRGTPVSKLPKELRPKLNRSKRRALTKTQLRRKTRRQRARMSKFPRVIFAYNE.

Positions 10–69 form a coiled coil; it reads QLGIKQIEERAAEIKAELAALRQKKNSGDVGANDIKTAKKNLARALTVRREKILEELVEA.

It belongs to the universal ribosomal protein uL29 family. As to quaternary structure, component of the large ribosomal subunit.

The protein localises to the cytoplasm. The protein is Large ribosomal subunit protein uL29B (RPL35C) of Encephalitozoon cuniculi (strain GB-M1) (Microsporidian parasite).